A 408-amino-acid polypeptide reads, in one-letter code: tRNA wybutosine-synthesizing protein 2 homolog (408 aa).

S-adenosyl-L-methionine is bound by residues Ser201, Lys208, Glu248, and 276–277 (DN).

This sequence belongs to the class I-like SAM-binding methyltransferase superfamily. TRM5/TYW2 family.

The catalysed reaction is 4-demethylwyosine(37) in tRNA(Phe) + S-adenosyl-L-methionine = 4-demethyl-7-[(3S)-3-amino-3-carboxypropyl]wyosine(37) in tRNA(Phe) + S-methyl-5'-thioadenosine + H(+). Its pathway is tRNA modification; wybutosine-tRNA(Phe) biosynthesis. Functionally, S-adenosyl-L-methionine-dependent transferase that acts as a component of the wybutosine biosynthesis pathway. Wybutosine is a hyper modified guanosine with a tricyclic base found at the 3'-position adjacent to the anticodon of eukaryotic phenylalanine tRNA. Catalyzes the transfer of the alpha-amino-alpha-carboxypropyl (acp) group from S-adenosyl-L-methionine to the C-7 position of 4-demethylwyosine (imG-14) to produce wybutosine-86. The protein is tRNA wybutosine-synthesizing protein 2 homolog (trmt12) of Danio rerio (Zebrafish).